The sequence spans 382 residues: Galactokinase (382 aa).

34 to 37 contacts substrate; the sequence is EHTD. 124 to 130 is a binding site for ATP; it reads GAGLSSS. The Mg(2+) site is built by Ser130 and Glu162. Asp174 serves as the catalytic Proton acceptor. Substrate is bound at residue Tyr223.

This sequence belongs to the GHMP kinase family. GalK subfamily.

It is found in the cytoplasm. It catalyses the reaction alpha-D-galactose + ATP = alpha-D-galactose 1-phosphate + ADP + H(+). The protein operates within carbohydrate metabolism; galactose metabolism. In terms of biological role, catalyzes the transfer of the gamma-phosphate of ATP to D-galactose to form alpha-D-galactose-1-phosphate (Gal-1-P). The protein is Galactokinase of Shigella boydii serotype 18 (strain CDC 3083-94 / BS512).